The chain runs to 172 residues: Envelope protein UL45 (172 aa).

The Intravirion portion of the chain corresponds to 1–27 (MPLRASEHAYRPLGPGTPPMRARLPAA). Residues 28 to 48 (AWVGVGTIIGGVVIIAALVLV) traverse the membrane as a helical; Signal-anchor for type II membrane protein segment. At 49-172 (PSRASWALSP…TSTRNALGLP (124 aa)) the chain is on the virion surface side.

The protein belongs to the herpesviridae HHV-1 UL45 family.

It is found in the virion membrane. Important virulence factor of HSV neurotropism. Seems to be required for glycoprotein B-induced fusion. Dispensable for growth in vitro. The chain is Envelope protein UL45 from Human herpesvirus 1 (strain 17) (HHV-1).